The chain runs to 61 residues: MAKTSMVAKQQKKQKFAVREYTRCERCGRPHSVYRKFKLCRICFRELAYKGQIPGVRKASW.

Positions 24, 27, 40, and 43 each coordinate Zn(2+).

This sequence belongs to the universal ribosomal protein uS14 family. Zinc-binding uS14 subfamily. As to quaternary structure, part of the 30S ribosomal subunit. Contacts proteins S3 and S10. It depends on Zn(2+) as a cofactor.

Its function is as follows. Binds 16S rRNA, required for the assembly of 30S particles and may also be responsible for determining the conformation of the 16S rRNA at the A site. The chain is Small ribosomal subunit protein uS14B from Staphylococcus epidermidis (strain ATCC 35984 / DSM 28319 / BCRC 17069 / CCUG 31568 / BM 3577 / RP62A).